Consider the following 484-residue polypeptide: Glycogen synthase (484 aa).

Position 15 (Lys15) interacts with ADP-alpha-D-glucose.

It belongs to the glycosyltransferase 1 family. Bacterial/plant glycogen synthase subfamily.

It carries out the reaction [(1-&gt;4)-alpha-D-glucosyl](n) + ADP-alpha-D-glucose = [(1-&gt;4)-alpha-D-glucosyl](n+1) + ADP + H(+). It participates in glycan biosynthesis; glycogen biosynthesis. Functionally, synthesizes alpha-1,4-glucan chains using ADP-glucose. The sequence is that of Glycogen synthase from Anoxybacillus flavithermus (strain DSM 21510 / WK1).